The chain runs to 715 residues: Palmitoyltransferase ZDHHC5 (715 aa).

Residues 1–13 are Cytoplasmic-facing; the sequence is MPAESGKRFKPSK. A helical transmembrane segment spans residues 14-34; that stretch reads YVPVSAAAIFLVGATTLFFAF. At 35–38 the chain is on the extracellular side; the sequence is TCPG. Residues 39 to 59 traverse the membrane as a helical segment; it reads LSLCVSPAVPIYNAIVFLFVL. Over 60–148 the chain is Cytoplasmic; that stretch reads ANFSMATFMD…NCIGRRNYRY (89 aa). Tyr-91 bears the Phosphotyrosine mark. The 51-residue stretch at 104 to 154 folds into the DHHC domain; that stretch reads KWCATCRFYRPPRCSHCSVCDNCVEEFDHHCPWVNNCIGRRNYRYFFLFLL. The active-site S-palmitoyl cysteine intermediate is the Cys-134. A helical transmembrane segment spans residues 149-169; the sequence is FFLFLLSLTAHIMGVFGFGLL. At 170-191 the chain is on the extracellular side; that stretch reads YVLYHMEELSGVRTAVTMAVMC. The helical transmembrane segment at 192 to 212 threads the bilayer; that stretch reads VAGLFFIPVAGLTGFHVVLVA. The Cytoplasmic portion of the chain corresponds to 213–715; that stretch reads RGRTTNEQVT…VGGTTYEISV (503 aa). Phosphoserine occurs at positions 247, 296, and 299. A disordered region spans residues 289-648; it reads GELRRSKSKG…SQKAPAGVSE (360 aa). Thr-303 is modified (phosphothreonine). Ser-345 is subject to Phosphoserine. Phosphothreonine occurs at positions 348 and 350. Low complexity predominate over residues 359–373; the sequence is SSSSTSAAMPHSSSA. Residues Ser-380, Ser-398, Ser-406, and Ser-409 each carry the phosphoserine modification. The residue at position 411 (Thr-411) is a Phosphothreonine. Residues Ser-415, Ser-425, Ser-429, and Ser-432 each carry the phosphoserine modification. Low complexity predominate over residues 422-432; it reads SSGSRSSSLKS. Thr-436 bears the Phosphothreonine mark. Over residues 442 to 478 the composition is skewed to polar residues; sequence QLQSIRSEGTTSTSYKSLANQTRNGSLSYDSLLTPSD. Phosphoserine is present on residues Ser-529 and Ser-554. Residue Arg-617 is modified to Omega-N-methylarginine. Ser-621 carries the phosphoserine modification. A Phosphothreonine modification is found at Thr-659. The interval 666-715 is disordered; the sequence is LKTAYSKSNGQPKSIGSASPGPGQQPLSSPTRGGVKKVSGVGGTTYEISV. The segment covering 668 to 679 has biased composition (polar residues); sequence TAYSKSNGQPKS. Positions 681 to 695 are enriched in low complexity; that stretch reads GSASPGPGQQPLSSP. A phosphoserine mark is found at Ser-684 and Ser-694. The residue at position 697 (Arg-697) is an Omega-N-methylarginine.

Belongs to the DHHC palmitoyltransferase family. ERF2/ZDHHC9 subfamily. Phosphorylation regulates association with endocytic proteins and its subcellular localization. Phosphorylation by LYN during fatty acid uptake leads to inactivation of the activity. In terms of processing, autopalmitoylated. Palmitoylation of the C-terminal tail regulates stimulation-dependent plasma membrane motility.

The protein localises to the cell membrane. The enzyme catalyses L-cysteinyl-[protein] + hexadecanoyl-CoA = S-hexadecanoyl-L-cysteinyl-[protein] + CoA. In terms of biological role, palmitoyltransferase that catalyzes the addition of palmitate onto various protein substrates such as CTNND2, CD36, GSDMD, NLRP3, NOD1, NOD2, STAT3 and S1PR1 thus plays a role in various biological processes including cell adhesion, inflammation, fatty acid uptake, bacterial sensing or cardiac functions. Plays an important role in the regulation of synapse efficacy by mediating palmitoylation of delta-catenin/CTNND2, thereby increasing synaptic delivery and surface stabilization of alpha-amino-3-hydroxy-5-methyl-4-isoxazole propionic acid receptors (AMPARs). Under basal conditions, remains at the synaptic membrane through FYN-mediated phosphorylation that prevents association with endocytic proteins. Neuronal activity enhances the internalization and trafficking of DHHC5 from spines to dendritic shafts where it palmitoylates delta-catenin/CTNND2. Regulates cell adhesion at the plasma membrane by palmitoylating GOLGA7B and DSG2. Plays a role in innate immune response by mediating the palmitoylation of NOD1 and NOD2 and their proper recruitment to the bacterial entry site and phagosomes. Also participates in fatty acid uptake by palmitoylating CD36 and thereby targeting it to the plasma membrane. Upon binding of fatty acids to CD36, gets phosphorylated by LYN leading to inactivation and subsequent CD36 caveolar endocytosis. Controls oligodendrocyte development by catalyzing STAT3 palmitoylation. Acts as a regulator of inflammatory response by mediating palmitoylation of NLRP3 and GSDMD. Palmitoylates NLRP3 to promote inflammasome assembly and activation. Activates pyroptosis by catalyzing palmitoylation of gasdermin-D (GSDMD), thereby promoting membrane translocation and pore formation of GSDMD. This is Palmitoyltransferase ZDHHC5 (ZDHHC5) from Canis lupus familiaris (Dog).